Here is a 317-residue protein sequence, read N- to C-terminus: HTH-type transcriptional regulator CfxR (317 aa).

The 58-residue stretch at 8–65 (LTLRQLQIFVTVARHASFVRAAEELHLTQPAVSMQVKQLESVVGMALFERVKGQLTLT) folds into the HTH lysR-type domain. Residues 25-44 (FVRAAEELHLTQPAVSMQVK) constitute a DNA-binding region (H-T-H motif).

This sequence belongs to the LysR transcriptional regulatory family.

Functionally, trans-acting transcriptional regulator of RuBisCO genes (cfxLS) expression. The polypeptide is HTH-type transcriptional regulator CfxR (cfxR) (Cupriavidus necator (strain ATCC 17699 / DSM 428 / KCTC 22496 / NCIMB 10442 / H16 / Stanier 337) (Ralstonia eutropha)).